Consider the following 171-residue polypeptide: uncharacterized protein (171 aa).

This is an uncharacterized protein from Mycobacterium tuberculosis (strain ATCC 25618 / H37Rv).